The following is a 360-amino-acid chain: MSKEKALESALSQIEKQFGKGSIMRLGDQETAHDIDVIPSGIIALDVALGIGGYPKGRIIEIYGHESSGKTTLTLLAIAQCQKQGGVAAFIDAEHALDPKYAKLLGVDVDNLIVSQPDTGEQALEIADMLVRSGGIDIVVIDSVAALTPKAEIEGDMGDSHMGLQARLMSQALRKLTANIKRSNTLVMFINQIRMKIGVMFGNPETTTGGNALKFYASVRLEVRKGGSIKDGVDVSGNEIKVKIVKNKVAPPFKQAEFELIYGEGISLEAELIDLGAKYEIIEKSGAWYSYKGKKIGQGKEKSKEYLKENTLERDEIEKALLQLLLPQKYAVQEQVQPEPKSKQSKSKQASEQATQDELI.

Residue 64–71 (GHESSGKT) participates in ATP binding. The tract at residues 333 to 360 (QEQVQPEPKSKQSKSKQASEQATQDELI) is disordered.

This sequence belongs to the RecA family.

The protein resides in the cytoplasm. Functionally, can catalyze the hydrolysis of ATP in the presence of single-stranded DNA, the ATP-dependent uptake of single-stranded DNA by duplex DNA, and the ATP-dependent hybridization of homologous single-stranded DNAs. It interacts with LexA causing its activation and leading to its autocatalytic cleavage. This chain is Protein RecA, found in Francisella philomiragia subsp. philomiragia (strain ATCC 25017 / CCUG 19701 / FSC 153 / O#319-036).